The primary structure comprises 127 residues: uncharacterized protein (127 aa).

This is an uncharacterized protein from Bacillus subtilis (strain 168).